Consider the following 270-residue polypeptide: Putative pyruvate, phosphate dikinase regulatory protein (270 aa).

151–158 (GVSRTSKT) contributes to the ADP binding site.

This sequence belongs to the pyruvate, phosphate/water dikinase regulatory protein family. PDRP subfamily.

The enzyme catalyses N(tele)-phospho-L-histidyl/L-threonyl-[pyruvate, phosphate dikinase] + ADP = N(tele)-phospho-L-histidyl/O-phospho-L-threonyl-[pyruvate, phosphate dikinase] + AMP + H(+). It catalyses the reaction N(tele)-phospho-L-histidyl/O-phospho-L-threonyl-[pyruvate, phosphate dikinase] + phosphate + H(+) = N(tele)-phospho-L-histidyl/L-threonyl-[pyruvate, phosphate dikinase] + diphosphate. Functionally, bifunctional serine/threonine kinase and phosphorylase involved in the regulation of the pyruvate, phosphate dikinase (PPDK) by catalyzing its phosphorylation/dephosphorylation. This chain is Putative pyruvate, phosphate dikinase regulatory protein, found in Lysinibacillus sphaericus (strain C3-41).